We begin with the raw amino-acid sequence, 726 residues long: Probable cyclic nucleotide-gated ion channel 14 (726 aa).

The Cytoplasmic segment spans residues 1–86 (MEFKRDNTVR…GDAVLQWNRV (86 aa)). Residues 87–107 (FLFWCLVALYVDPLFFFLSSV) form a helical membrane-spanning segment. Residues 108–122 (KRIGRSSCMTTDLKL) lie on the Extracellular side of the membrane. A helical membrane pass occupies residues 123 to 143 (GIVITFFRTLADLFYVLHIVI). Over 144–177 (KFRTAYVSRTSRVFGRGELVKDPKLIARRYLRSD) the chain is Cytoplasmic. A helical transmembrane segment spans residues 178-198 (FIVDLIACLPLPQIVSWFILP). Over 199–211 (SIRSSHSDHTTNA) the chain is Extracellular. A helical transmembrane segment spans residues 212 to 232 (LVLIVLVQYIPRLYLIFPLSA). The Cytoplasmic portion of the chain corresponds to 233–252 (EIIKATGVVTTTAWAGAAYN). Residues 253-273 (LLQYMLASHILGSAWYLLSIE) traverse the membrane as a helical segment. At 274–377 (RQATCWKAEC…LSTSTSVLET (104 aa)) the chain is on the extracellular side. A helical membrane pass occupies residues 378–398 (MFAILVAIFGLVLFALLIGNM). Residues 399–726 (QTYLQSITVR…PDEPDFSVDD (328 aa)) lie on the Cytoplasmic side of the membrane. A nucleoside 3',5'-cyclic phosphate-binding positions include 481-605 (LFAQ…SKKL) and Glu552. Residues 597 to 612 (FRRLHSKKLQHTFRYY) are calmodulin-binding. The IQ domain maps to 617-646 (RTWAACFVQVAWRRYKRKKLAKSLSLAESF). Residues 707–726 (KDVEIPMLPKPDEPDFSVDD) form a disordered region.

The protein belongs to the cyclic nucleotide-gated cation channel (TC 1.A.1.5) family. As to quaternary structure, homotetramer or heterotetramer.

It localises to the cell membrane. Its function is as follows. Probable cyclic nucleotide-gated ion channel. This Arabidopsis thaliana (Mouse-ear cress) protein is Probable cyclic nucleotide-gated ion channel 14 (CNGC14).